A 353-amino-acid polypeptide reads, in one-letter code: 4-hydroxy-3-methylbut-2-en-1-yl diphosphate synthase (flavodoxin) (353 aa).

Positions 268, 271, 303, and 310 each coordinate [4Fe-4S] cluster.

Belongs to the IspG family. The cofactor is [4Fe-4S] cluster.

The enzyme catalyses (2E)-4-hydroxy-3-methylbut-2-enyl diphosphate + oxidized [flavodoxin] + H2O + 2 H(+) = 2-C-methyl-D-erythritol 2,4-cyclic diphosphate + reduced [flavodoxin]. It functions in the pathway isoprenoid biosynthesis; isopentenyl diphosphate biosynthesis via DXP pathway; isopentenyl diphosphate from 1-deoxy-D-xylulose 5-phosphate: step 5/6. Its function is as follows. Converts 2C-methyl-D-erythritol 2,4-cyclodiphosphate (ME-2,4cPP) into 1-hydroxy-2-methyl-2-(E)-butenyl 4-diphosphate. The chain is 4-hydroxy-3-methylbut-2-en-1-yl diphosphate synthase (flavodoxin) from Ruminiclostridium cellulolyticum (strain ATCC 35319 / DSM 5812 / JCM 6584 / H10) (Clostridium cellulolyticum).